The primary structure comprises 52 residues: Protein RepA (52 aa).

Residues 20 to 40 (KLEELAQKYGMTKSGLVNFLV) constitute a DNA-binding region (H-T-H motif).

This sequence belongs to the transcriptional regulatory CopG/NikR family. As to quaternary structure, homodimer.

Its function is as follows. Regulates the plasmid copy number. RepA binds to the repAB promoter thus controlling the synthesis of the plasmid replication initiator protein RepB. This is Protein RepA (repA) from Lactiplantibacillus plantarum (Lactobacillus plantarum).